Consider the following 102-residue polypeptide: Small ubiquitin-related modifier 1-A (102 aa).

The disordered stretch occupies residues 1–20 (MSDQEAKPSSEDLGDKKDGG). A Ubiquitin-like domain is found at 21 to 98 (DYIKLKVIGQ…IEVYQEQTGG (78 aa)). A Glycyl lysine isopeptide (Gly-Lys) (interchain with K-? in acceptor proteins) cross-link involves residue Gly-98. Positions 99-102 (HSTF) are excised as a propeptide.

Belongs to the ubiquitin family. SUMO subfamily. Interacts with sae2, ube2i, ranbp2, pias1 and pias2. Covalently attached to a number of proteins including rangap1 and ranbp2. Interacts with sox9 and sox10. In terms of processing, cleavage of precursor form by a sentrin-specific protease is necessary for function.

The protein resides in the nucleus membrane. It localises to the nucleus speckle. Its subcellular location is the cytoplasm. The protein localises to the nucleus. It is found in the PML body. The protein resides in the cell membrane. Its function is as follows. Ubiquitin-like protein that can be covalently attached to proteins as a monomer or a lysine-linked polymer. Covalent attachment via an isopeptide bond to its substrates requires prior activation by the E1 complex sae1-sae2 and linkage to the E2 enzyme ube2i. This post-translational modification on lysine residues of proteins plays a crucial role in a number of cellular processes such as nuclear transport, DNA replication and repair, mitosis and signal transduction. Polymeric sumo1 chains are also susceptible to polyubiquitination which functions as a signal for proteasomal degradation of modified proteins. This is Small ubiquitin-related modifier 1-A (sumo1-a) from Xenopus laevis (African clawed frog).